A 348-amino-acid chain; its full sequence is NADH-quinone oxidoreductase subunit H (348 aa).

A run of 8 helical transmembrane segments spans residues 21-41 (IAGI…VIYV), 87-107 (GIFL…WAVI), 120-140 (VGLL…VMAG), 166-186 (IGFI…SEIV), 195-215 (GIVN…LFFI), 258-278 (NILL…LPPI), 288-308 (GFLW…WIWA), and 325-345 (VFLP…MATG).

Belongs to the complex I subunit 1 family. In terms of assembly, NDH-1 is composed of 14 different subunits. Subunits NuoA, H, J, K, L, M, N constitute the membrane sector of the complex.

The protein resides in the cell inner membrane. It catalyses the reaction a quinone + NADH + 5 H(+)(in) = a quinol + NAD(+) + 4 H(+)(out). In terms of biological role, NDH-1 shuttles electrons from NADH, via FMN and iron-sulfur (Fe-S) centers, to quinones in the respiratory chain. The immediate electron acceptor for the enzyme in this species is believed to be ubiquinone. Couples the redox reaction to proton translocation (for every two electrons transferred, four hydrogen ions are translocated across the cytoplasmic membrane), and thus conserves the redox energy in a proton gradient. This subunit may bind ubiquinone. The chain is NADH-quinone oxidoreductase subunit H from Erythrobacter litoralis (strain HTCC2594).